Reading from the N-terminus, the 117-residue chain is Phosphoribosyl-ATP pyrophosphatase (117 aa).

This sequence belongs to the PRA-PH family.

Its subcellular location is the cytoplasm. It catalyses the reaction 1-(5-phospho-beta-D-ribosyl)-ATP + H2O = 1-(5-phospho-beta-D-ribosyl)-5'-AMP + diphosphate + H(+). It participates in amino-acid biosynthesis; L-histidine biosynthesis; L-histidine from 5-phospho-alpha-D-ribose 1-diphosphate: step 2/9. The chain is Phosphoribosyl-ATP pyrophosphatase from Rhodospirillum rubrum (strain ATCC 11170 / ATH 1.1.1 / DSM 467 / LMG 4362 / NCIMB 8255 / S1).